Consider the following 266-residue polypeptide: tRNA dimethylallyltransferase (266 aa).

Belongs to the IPP transferase family. As to quaternary structure, monomer. The cofactor is Mg(2+).

The enzyme catalyses adenosine(37) in tRNA + dimethylallyl diphosphate = N(6)-dimethylallyladenosine(37) in tRNA + diphosphate. Its function is as follows. Catalyzes the transfer of a dimethylallyl group onto the adenine at position 37 in tRNAs that read codons beginning with uridine, leading to the formation of N6-(dimethylallyl)adenosine (i(6)A). The chain is tRNA dimethylallyltransferase (miaA) from Helicobacter acinonychis (strain Sheeba).